The following is a 408-amino-acid chain: uncharacterized protein (408 aa).

Over residues 376–386 (NELNDPNSVYN) the composition is skewed to polar residues. The interval 376–408 (NELNDPNSVYNSPEFDHQGDQKKLTEENGCVVQ) is disordered. The span at 389-401 (EFDHQGDQKKLTE) shows a compositional bias: basic and acidic residues.

This is an uncharacterized protein from Acanthamoeba polyphaga (Amoeba).